Reading from the N-terminus, the 115-residue chain is MTIETFSWGIKVSSQPTEGSKDTVRKIQFGDGYAQVSGSGLNDEIRTYEFSFSGDPITANEIHAFLRRHKVKSFIFTPPFGDTALWRVEADTLKKVVKNVKVITVTATFEQAFAP.

This sequence belongs to the lambda-like tail tip protein M family.

It is found in the virion. Its subcellular location is the host cytoplasm. Its function is as follows. Part of the distal tail tip which plays a role in DNA ejection during entry, and in tail assembly initiation during exit. May bind tail tip complex associated with tape measure protein and allow tail tube protein polymerization on top of tail tip. This is Tail tip protein M from Escherichia coli (Bacteriophage N15).